The primary structure comprises 2028 residues: Phosphatidylinositol 4-kinase alpha 1 (2028 aa).

The segment at 184–241 (PASPKEQRQQNSANSETDTSSSQGSPISTNRYPSGKTEMASPGDEVASHGSNLSSKSS) is disordered. Positions 192-215 (QQNSANSETDTSSSQGSPISTNRY) are enriched in polar residues. A compositionally biased stretch (low complexity) spans 231 to 241 (SHGSNLSSKSS). Positions 1483 to 1659 (TEYAKTAFSV…NAAFQEILPQ (177 aa)) constitute a PIK helical domain. A pleckstrin homology (PH) domain conferring phosphoinositide binding specificity region spans residues 1660–1773 (VRQHIIDGFS…VKPQACIFKV (114 aa)). Residues 1734–2012 (VDSGIPLQSA…VCTDAYNKWT (279 aa)) enclose the PI3K/PI4K catalytic domain. The tract at residues 1740–1746 (LQSAAKV) is G-loop. The interval 1876-1884 (QPKDRHNGN) is catalytic loop. The tract at residues 1895–1920 (HIDFGFILETSPGGNMRFESAHFKLS) is activation loop.

Belongs to the PI3/PI4-kinase family. Type III PI4K subfamily. Interacts in vitro with actin filaments via its PH domain. In terms of tissue distribution, present in leaves and inflorescences.

The protein localises to the membrane. Its subcellular location is the cytoplasm. It is found in the perinuclear region. It catalyses the reaction a 1,2-diacyl-sn-glycero-3-phospho-(1D-myo-inositol) + ATP = a 1,2-diacyl-sn-glycero-3-phospho-(1D-myo-inositol 4-phosphate) + ADP + H(+). With respect to regulation, repressed by PtdIns4P, adenosine and wortmannin, but stimulated by other negatively charged lipids such as PtdIns3P, PtdOH, and phosphatidyl-serine (PtdSer). Its function is as follows. Acts on phosphatidylinositol (PtdIns) in the first committed step in the production of the second messenger inositol-1,4,5,-trisphosphate. Can bind to phosphatidylinositol 4-monophosphate (PI-4-P or PtdIns4P), phosphatidylinositol 4,5-bisphosphate (PI-4,5-P2 or PtdIns4,5P2), and phosphatidic acid (PtdOH), but not to 3-phosphoinositides. May function upstream of the cold response phosphoinositide-dependent phospholipase C (PI-PLC) pathway. This chain is Phosphatidylinositol 4-kinase alpha 1, found in Arabidopsis thaliana (Mouse-ear cress).